Here is a 208-residue protein sequence, read N- to C-terminus: ATP-dependent Clp protease proteolytic subunit (208 aa).

Serine 98 serves as the catalytic Nucleophile. Histidine 123 is an active-site residue.

This sequence belongs to the peptidase S14 family. As to quaternary structure, fourteen ClpP subunits assemble into 2 heptameric rings which stack back to back to give a disk-like structure with a central cavity, resembling the structure of eukaryotic proteasomes.

The protein localises to the cytoplasm. The catalysed reaction is Hydrolysis of proteins to small peptides in the presence of ATP and magnesium. alpha-casein is the usual test substrate. In the absence of ATP, only oligopeptides shorter than five residues are hydrolyzed (such as succinyl-Leu-Tyr-|-NHMec, and Leu-Tyr-Leu-|-Tyr-Trp, in which cleavage of the -Tyr-|-Leu- and -Tyr-|-Trp bonds also occurs).. In terms of biological role, cleaves peptides in various proteins in a process that requires ATP hydrolysis. Has a chymotrypsin-like activity. Plays a major role in the degradation of misfolded proteins. This Wolbachia sp. subsp. Drosophila simulans (strain wRi) protein is ATP-dependent Clp protease proteolytic subunit.